Here is a 326-residue protein sequence, read N- to C-terminus: Probable cell division protein WhiA (326 aa).

Positions 275–308 form a DNA-binding region, H-T-H motif; that stretch reads SLDELGHHADPPMTKDAVAGRIRRLLAMADKKAV.

It belongs to the WhiA family.

Functionally, involved in cell division and chromosome segregation. In Clavibacter michiganensis subsp. michiganensis (strain NCPPB 382), this protein is Probable cell division protein WhiA.